Reading from the N-terminus, the 181-residue chain is MFKKFDDKENVSNCIQLKTSVIKGIKNQLIDQFPVIEQWLNQIMPKKDPVKIVRCHEHIEILTVNGELLFFRQREGSFYPTLRLLHKYPFILPHQQVDKGAIKFVLSGANIMCPGLTSPGAKLYPAAAETVVAIMAEGKQHALCVGVMKMSADDIEKVNKGIGIENIHYLNDGLWHMKTYK.

Residues 92–171 form the PUA domain; sequence LPHQQVDKGA…IGIENIHYLN (80 aa).

It belongs to the MCTS1 family.

It is found in the cytoplasm. In terms of biological role, plays a role as translation enhancer and involved in cell cycle regulation. This chain is Malignant T-cell-amplified sequence 1-B (mcts1-b), found in Xenopus laevis (African clawed frog).